A 653-amino-acid chain; its full sequence is Thioredoxin domain-containing protein 3 homolog (653 aa).

One can recognise a Thioredoxin domain in the interval 9–114 (LQETLNTQEA…QETIQETLKN (106 aa)). Cysteines 38 and 41 form a disulfide. Residues 155-299 (KQITVALIKP…FFFPDFKPPT (145 aa)) form an NDK 1 region. A disordered region spans residues 300 to 323 (YRSAKSAASRASGRRSKTPSQKPR). Residues 301–310 (RSAKSAASRA) show a composition bias toward low complexity. 2 NDK regions span residues 324 to 459 (LQRT…IFHV) and 459 to 597 (VEQT…QFDW). Residues 603–653 (QAEEGEVNETSGEQPTDEQSGETEKTEEDGEHEGAQSDQQQAVSEAMEKEE) form a disordered region. The segment covering 617 to 633 (PTDEQSGETEKTEEDGE) has biased composition (acidic residues).

This sequence in the C-terminal section; belongs to the NDK family. Testis-specific.

In terms of biological role, may be required during the final stages of sperm tail maturation. May act by reducing disulfide bonds within the sperm components. This Ciona intestinalis (Transparent sea squirt) protein is Thioredoxin domain-containing protein 3 homolog (CiIC3).